A 274-amino-acid polypeptide reads, in one-letter code: Dermonecrotic toxin LspiSicTox-betaIII2 (274 aa).

Histidine 5 is an active-site residue. Mg(2+) contacts are provided by glutamate 25 and aspartate 27. Histidine 41 serves as the catalytic Nucleophile. 2 disulfide bridges follow: cysteine 45-cysteine 51 and cysteine 47-cysteine 189. Aspartate 85 is a Mg(2+) binding site.

This sequence belongs to the arthropod phospholipase D family. Class II subfamily. Requires Mg(2+) as cofactor. As to expression, expressed by the venom gland.

It is found in the secreted. It carries out the reaction an N-(acyl)-sphingosylphosphocholine = an N-(acyl)-sphingosyl-1,3-cyclic phosphate + choline. It catalyses the reaction an N-(acyl)-sphingosylphosphoethanolamine = an N-(acyl)-sphingosyl-1,3-cyclic phosphate + ethanolamine. The enzyme catalyses a 1-acyl-sn-glycero-3-phosphocholine = a 1-acyl-sn-glycero-2,3-cyclic phosphate + choline. The catalysed reaction is a 1-acyl-sn-glycero-3-phosphoethanolamine = a 1-acyl-sn-glycero-2,3-cyclic phosphate + ethanolamine. In terms of biological role, dermonecrotic toxins cleave the phosphodiester linkage between the phosphate and headgroup of certain phospholipids (sphingolipid and lysolipid substrates), forming an alcohol (often choline) and a cyclic phosphate. This toxin acts on sphingomyelin (SM). It may also act on ceramide phosphoethanolamine (CPE), lysophosphatidylcholine (LPC) and lysophosphatidylethanolamine (LPE), but not on lysophosphatidylserine (LPS), and lysophosphatidylglycerol (LPG). It acts by transphosphatidylation, releasing exclusively cyclic phosphate products as second products. Induces dermonecrosis, hemolysis, increased vascular permeability, edema, inflammatory response, and platelet aggregation. This Loxosceles spinulosa (Recluse spider) protein is Dermonecrotic toxin LspiSicTox-betaIII2.